A 792-amino-acid polypeptide reads, in one-letter code: G-type lectin S-receptor-like serine/threonine-protein kinase At1g61440 (792 aa).

The signal sequence occupies residues 1-17 (MGKKRIVLLLFISFSYA). Residues 18–137 (EITKESPLSI…VTGRTLWESF (120 aa)) form the Bulb-type lectin domain. The Extracellular segment spans residues 18–419 (EITKESPLSI…ELDVHKRKMT (402 aa)). 3 N-linked (GlcNAc...) asparagine glycosylation sites follow: asparagine 46, asparagine 127, and asparagine 229. The EGF-like; atypical domain occupies 271–307 (PANSCDIYGVCGPFGFCVISDPPKCKCFKGFVPKSIE). Cystine bridges form between cysteine 275–cysteine 287 and cysteine 281–cysteine 295. N-linked (GlcNAc...) asparagine glycosylation is found at asparagine 313, asparagine 329, and asparagine 368. The region spanning 326–408 (CQGNSTGKDA…GEILSIRLAH (83 aa)) is the PAN domain. 2 disulfides stabilise this stretch: cysteine 361–cysteine 382 and cysteine 365–cysteine 371. Residues 420–440 (IVASTVSLTLFVILGFATFGF) traverse the membrane as a helical segment. Residues 441–792 (WRNRVKHHDA…EMTESVILGR (352 aa)) are Cytoplasmic-facing. Residues 478 to 763 (FSLSNKLGHG…DLPLPKQPTF (286 aa)) form the Protein kinase domain. Residues 484 to 492 (LGHGGFGSV) and lysine 506 contribute to the ATP site. Residues serine 512 and serine 527 each carry the phosphoserine modification. The caM-binding stretch occupies residues 567–584 (RKRLELDWPKRFDIIQGI). Catalysis depends on aspartate 603, which acts as the Proton acceptor. A phosphoserine mark is found at serine 607 and serine 620. The residue at position 637 (threonine 637) is a Phosphothreonine. Phosphoserine occurs at positions 680 and 774.

This sequence belongs to the protein kinase superfamily. Ser/Thr protein kinase family.

It localises to the cell membrane. It catalyses the reaction L-seryl-[protein] + ATP = O-phospho-L-seryl-[protein] + ADP + H(+). The enzyme catalyses L-threonyl-[protein] + ATP = O-phospho-L-threonyl-[protein] + ADP + H(+). The chain is G-type lectin S-receptor-like serine/threonine-protein kinase At1g61440 from Arabidopsis thaliana (Mouse-ear cress).